Reading from the N-terminus, the 428-residue chain is tRNA(Ile2) 2-agmatinylcytidine synthetase TiaS (428 aa).

This sequence belongs to the TiaS family.

The protein localises to the cytoplasm. It carries out the reaction cytidine(34) in tRNA(Ile2) + agmatine + ATP + H2O = 2-agmatinylcytidine(34) in tRNA(Ile2) + AMP + 2 phosphate + 2 H(+). Functionally, ATP-dependent agmatine transferase that catalyzes the formation of 2-agmatinylcytidine (agm2C) at the wobble position (C34) of tRNA(Ile2), converting the codon specificity from AUG to AUA. The protein is tRNA(Ile2) 2-agmatinylcytidine synthetase TiaS of Methanosarcina acetivorans (strain ATCC 35395 / DSM 2834 / JCM 12185 / C2A).